A 515-amino-acid chain; its full sequence is Gap junction alpha-9 protein (515 aa).

The Cytoplasmic portion of the chain corresponds to 1–19 (MGDWNLLGDTLEEVHIHST). The chain crosses the membrane as a helical span at residues 20-40 (MIGKIWLTILFIFRMLVLGVA). Over 41–77 (AEDVWNDEQSGFICNTEQPGCRNVCYDQAFPISLIRY) the chain is Extracellular. Residues 78–98 (WVLQVIFVSSPSLVYMGHALY) form a helical membrane-spanning segment. At 99 to 166 (RLRVLEEERQ…YVIHIFTRSV (68 aa)) the chain is on the cytoplasmic side. The helical transmembrane segment at 167-187 (VEVGFMIGQYLLYGFHLEPLF) threads the bilayer. The Extracellular segment spans residues 188 to 209 (KCHGHPCPNIIDCFVSRPTEKT). The helical transmembrane segment at 210–230 (IFLLFMQSIATISLFLNILEI) threads the bilayer. The Cytoplasmic segment spans residues 231 to 515 (FHLGFKKIKR…GRRVPTDLQI (285 aa)). Over residues 370–380 (KRETEGKDSKR) the composition is skewed to basic and acidic residues. Disordered stretches follow at residues 370 to 400 (KRETEGKDSKRNYYSRGHRSIPGVAIDGENN) and 428 to 472 (SSTE…NTAD). Over residues 456–472 (PPSQGDSQSLDIPNTAD) the composition is skewed to polar residues.

The protein belongs to the connexin family. Alpha-type (group II) subfamily. In terms of assembly, a connexon is composed of a hexamer of connexins. Highly abundant in skeletal muscle. Also detected in testis.

The protein resides in the cell membrane. Its subcellular location is the cell junction. It is found in the gap junction. Functionally, one gap junction consists of a cluster of closely packed pairs of transmembrane channels, the connexons, through which materials of low MW diffuse from one cell to a neighboring cell. This is Gap junction alpha-9 protein (GJA9) from Homo sapiens (Human).